A 1194-amino-acid chain; its full sequence is ATP-dependent RNA helicase DHX30 (1194 aa).

The span at 1 to 10 (MFSLDSFRKD) shows a compositional bias: basic and acidic residues. The interval 1 to 27 (MFSLDSFRKDRAQHRQRQCKLPPPRLP) is disordered. S6 and R15 each carry phosphoserine. A DRBM domain is found at 53 to 121 (PKNLLNSVIG…QAAAAACQLF (69 aa)). Residues 150–199 (ADSWWRPEPTMPPTSWRQLNPESIRPGGPGGLSRSLGREEEEDEEEELEE) are disordered. A compositionally biased stretch (acidic residues) spans 188-199 (EEEEDEEEELEE). S226 and S380 each carry phosphoserine. The Helicase ATP-binding domain maps to 444-612 (LNAIEQHPVV…FGGCPVIKVP (169 aa)). Residue 457 to 464 (GDTGCGKT) participates in ATP binding. The DEAH box motif lies at 559 to 562 (DEVH). The Helicase C-terminal domain maps to 654 to 827 (LVTDLVLHID…NLVLQAKIHM (174 aa)).

The protein belongs to the DEAD box helicase family. DEAH subfamily. Identified in a complex with TFAM and SSBP1. Interacts with AGO1 and AGO2. Interacts (via N-terminus) with ZC3HAV1 (via N-terminal domain) in an RNA-independent manner. Found in a complex with GRSF1, DDX28, FASTKD2 and FASTKD5. Phosphorylated on Ser-15.

It localises to the cytoplasm. Its subcellular location is the mitochondrion. The protein localises to the mitochondrion matrix. It is found in the mitochondrion nucleoid. It catalyses the reaction ATP + H2O = ADP + phosphate + H(+). Functionally, RNA-dependent helicase. Plays an important role in the assembly of the mitochondrial large ribosomal subunit. Required for optimal function of the zinc-finger antiviral protein ZC3HAV1. Associates with mitochondrial DNA. Involved in nervous system development and differentiation through its involvement in the up-regulation of a number of genes which are required for neurogenesis, including GSC, NCAM1, neurogenin, and NEUROD. In Homo sapiens (Human), this protein is ATP-dependent RNA helicase DHX30 (DHX30).